The following is a 180-amino-acid chain: NAD(P)H-quinone oxidoreductase subunit I, chloroplastic (180 aa).

2 4Fe-4S ferredoxin-type domains span residues 55 to 84 and 95 to 124; these read GRIHFEFDKCIACEVCVRVCPIDLPVVDWR and LNYSIDFGICIFCGNCVEYCPTNCLSMTEE. [4Fe-4S] cluster-binding residues include Cys-64, Cys-67, Cys-70, Cys-74, Cys-104, Cys-107, Cys-110, and Cys-114.

Belongs to the complex I 23 kDa subunit family. As to quaternary structure, NDH is composed of at least 16 different subunits, 5 of which are encoded in the nucleus. [4Fe-4S] cluster is required as a cofactor.

The protein localises to the plastid. The protein resides in the chloroplast thylakoid membrane. The catalysed reaction is a plastoquinone + NADH + (n+1) H(+)(in) = a plastoquinol + NAD(+) + n H(+)(out). It catalyses the reaction a plastoquinone + NADPH + (n+1) H(+)(in) = a plastoquinol + NADP(+) + n H(+)(out). Functionally, NDH shuttles electrons from NAD(P)H:plastoquinone, via FMN and iron-sulfur (Fe-S) centers, to quinones in the photosynthetic chain and possibly in a chloroplast respiratory chain. The immediate electron acceptor for the enzyme in this species is believed to be plastoquinone. Couples the redox reaction to proton translocation, and thus conserves the redox energy in a proton gradient. The sequence is that of NAD(P)H-quinone oxidoreductase subunit I, chloroplastic from Illicium oligandrum (Star anise).